Reading from the N-terminus, the 376-residue chain is MTATAQRQLPLDTTGAGQLAQQAELHPELNRAHVRFINLGKTYHGKQGAVEALGSIDLAIQRGEIFGIIGRSGAGKSSLIRTINRLEQPSSGRVLIDQVDIGEFNEDKLVELRRRIGMIFQHFNLMSAKTVWQNVELPLKVAGVPKEQRARKVTQLLELVGLQDKHKAYPAQLSGGQKQRVGIARALVHDPAILLCDEATSALDPETTQSILGLLREINQRLGLTIVLITHEMAVIRDICHRVVVLEQGRIVEQGPVWQVFGDPQHEVSKTLLAPLQLGLPKEWAERLSEYPQRPDAAILLDVHFTGVSDEGPDLAALFATLGGKVQLLQGGVERIQDRAIGHLILLIAGSPHPREELLLRARQLAPRVEVLGYVG.

The ABC transporter domain maps to 34–273; it reads VRFINLGKTY…PQHEVSKTLL (240 aa). 70 to 77 is an ATP binding site; that stretch reads GRSGAGKS.

The protein belongs to the ABC transporter superfamily. Methionine importer (TC 3.A.1.24) family. The complex is composed of two ATP-binding proteins (MetN), two transmembrane proteins (MetI) and a solute-binding protein (MetQ).

The protein resides in the cell inner membrane. It carries out the reaction L-methionine(out) + ATP + H2O = L-methionine(in) + ADP + phosphate + H(+). The catalysed reaction is D-methionine(out) + ATP + H2O = D-methionine(in) + ADP + phosphate + H(+). Part of the ABC transporter complex MetNIQ involved in methionine import. Responsible for energy coupling to the transport system. The sequence is that of Methionine import ATP-binding protein MetN 1 from Pseudomonas syringae pv. tomato (strain ATCC BAA-871 / DC3000).